The chain runs to 121 residues: Large ribosomal subunit protein bL12 (121 aa).

Belongs to the bacterial ribosomal protein bL12 family. Homodimer. Part of the ribosomal stalk of the 50S ribosomal subunit. Forms a multimeric L10(L12)X complex, where L10 forms an elongated spine to which 2 to 4 L12 dimers bind in a sequential fashion. Binds GTP-bound translation factors.

Its function is as follows. Forms part of the ribosomal stalk which helps the ribosome interact with GTP-bound translation factors. Is thus essential for accurate translation. The chain is Large ribosomal subunit protein bL12 from Leuconostoc mesenteroides subsp. mesenteroides (strain ATCC 8293 / DSM 20343 / BCRC 11652 / CCM 1803 / JCM 6124 / NCDO 523 / NBRC 100496 / NCIMB 8023 / NCTC 12954 / NRRL B-1118 / 37Y).